A 240-amino-acid chain; its full sequence is Probable peptide export permease protein YydJ (240 aa).

The next 6 helical transmembrane spans lie at V13 to V33, S50 to I70, I97 to L117, A126 to I146, I153 to I173, and V210 to F230.

The complex is composed of 2 ATP-binding proteins (YydI), two transmembrane proteins (YydJ).

The protein localises to the cell membrane. Its function is as follows. Suggested to be part of an ABC transporter complex YydIJ involved in export of the modified peptide YydF. The protein is Probable peptide export permease protein YydJ (yydJ) of Bacillus subtilis (strain 168).